We begin with the raw amino-acid sequence, 1384 residues long: RRP12-like protein (1384 aa).

Residues 1-13 (MGKFRSKLKRNGK) show a composition bias toward basic residues. A disordered region spans residues 1–32 (MGKFRSKLKRNGKGKTWSRGESATSNPTQMKH). Residues 19–29 (RGESATSNPTQ) show a composition bias toward polar residues. Residues Ser82, Ser85, Ser96, Ser1094, Ser1095, Ser1117, and Ser1119 each carry the phosphoserine modification. 3 disordered regions span residues 1082–1102 (LRKKQNLEAQEDSSDDELVSG), 1114–1155 (LADS…IRED), and 1176–1384 (SAQT…KKYK). Acidic residues-rich tracts occupy residues 1090-1099 (AQEDSSDDEL) and 1114-1127 (LADSDSDLPEDMDA). Polar residues predominate over residues 1176–1191 (SAQTATPAQSQKTKAQ). 6 positions are modified to phosphoserine: Ser1221, Ser1225, Ser1227, Ser1230, Ser1250, and Ser1251. Polar residues-rich tracts occupy residues 1276-1285 (SGKTTASSRY) and 1297-1315 (TAGNSDAMSVKSGKSTSRP). A compositionally biased stretch (basic and acidic residues) spans 1321 to 1334 (GSKKAKGDMKKSGK). Residues 1348-1362 (LNKRKRSMNSRKFKS) are compositionally biased toward basic residues. Residues 1369-1378 (AENGGAGGGR) show a composition bias toward gly residues.

Belongs to the RRP12 family.

The protein localises to the nucleus. The sequence is that of RRP12-like protein from Drosophila melanogaster (Fruit fly).